Consider the following 374-residue polypeptide: Retron Eco8 reverse transcriptase (374 aa).

Residues 25–252 (ENIITQSAIP…KEISINGYVI (228 aa)) form the Reverse transcriptase domain. Mg(2+) contacts are provided by Asp-107, Asp-200, and Asp-201.

The protein belongs to the bacterial reverse transcriptase family.

The catalysed reaction is DNA(n) + a 2'-deoxyribonucleoside 5'-triphosphate = DNA(n+1) + diphosphate. Functionally, reverse transcriptase (RT) component of antiviral defense system retron Eco8, composed of this RT, the following endonuclease and a non-coding RNA (ncRNA) encoded between them. Expression of retron Eco8 confers protection against bacteriophages T4, T6, T7 and SECphi4, SECphi6 and SECphi18. At multiplicity of infection (MOI) of 0.02 cultures slow growth when infected with SECphi4 but do not collapse, at MOI 2 cultures collapse. Responsible for synthesis of msDNA (a branched molecule with RNA linked by a 2',5'-phosphodiester bond to ssDNA). The retron transcript serves as primer (from a conserved internal G residue) and template for the reaction, and codes for the RT. In Escherichia coli, this protein is Retron Eco8 reverse transcriptase.